We begin with the raw amino-acid sequence, 723 residues long: Probable G-protein coupled receptor 149 (723 aa).

Residues 1–31 (MSVMPSNLSLNGTSFFAENHSIMDKPNEQRT) are Extracellular-facing. N-linked (GlcNAc...) asparagine glycans are attached at residues N7, N11, and N19. The chain crosses the membrane as a helical span at residues 32–52 (LNVFLFCSTFIIAFTVLLGSI). Residues 53–69 (YSLVSLLKLQNKSTISM) lie on the Cytoplasmic side of the membrane. Residues 70–90 (IVTSLSIDDLISIVPVIIFML) form a helical membrane-spanning segment. The Extracellular segment spans residues 91–106 (TQWSSDALPQPLCTTS). A disulfide bond links C103 and C181. Residues 107–127 (ALIYLFQGISSNLKGSLIVSY) form a helical membrane-spanning segment. The Cytoplasmic segment spans residues 128 to 148 (NFYSINKTETMNCSASKRRVS). The helical transmembrane segment at 149–169 (MVWAILSIWIVSLLICILPLC) threads the bilayer. Residues 170 to 188 (GWGKYIPTTWGCFTDHASS) are Extracellular-facing. The chain crosses the membrane as a helical span at residues 189-209 (YILFLFIVYSLCFCLLTVLSV). The Cytoplasmic segment spans residues 210-306 (PLTYQLLCSD…SFTVGFAQKR (97 aa)). A helical transmembrane segment spans residues 307-327 (FSLILALTKVILWLPMMIQMV). The Extracellular segment spans residues 328 to 338 (VQHITGYQSFS). The helical transmembrane segment at 339 to 359 (FETLSFLLTLLAATVTPVFVL) threads the bilayer. Topologically, residues 360–723 (SEHWIHLPCG…RKREEDGNSN (364 aa)) are cytoplasmic. Positions 451-513 (TTDSARPGPA…ERRLSHEEGH (63 aa)) are disordered. Positions 501-513 (EGPERRLSHEEGH) are enriched in basic and acidic residues.

The protein belongs to the G-protein coupled receptor 1 family. In terms of tissue distribution, specific expression in peripheral nervous system, including nerve growth factor-dependent sensory and sympathetic neurons, as well as enteric neurons.

The protein resides in the cell membrane. Its function is as follows. Orphan receptor. This is Probable G-protein coupled receptor 149 (GPR149) from Gallus gallus (Chicken).